Consider the following 32-residue polypeptide: Trypsin inhibitor 4 (32 aa).

3 disulfides stabilise this stretch: Cys-6-Cys-23, Cys-13-Cys-25, and Cys-19-Cys-31.

Belongs to the protease inhibitor I7 (squash-type serine protease inhibitor) family.

The protein localises to the secreted. Functionally, inhibits trypsin. This Cucurbita maxima (Pumpkin) protein is Trypsin inhibitor 4.